A 330-amino-acid polypeptide reads, in one-letter code: MAAGFLFHMGSLPAIATVGHKSKVLVIGGTGYLGKRLVTASLAAGHETYVLQRPEIGVDIEKIQLLLSFKKAGASLVSGSFNDYRSLVDAVKLVDVVICAVSGVHIRSHQILLQLKLVDAIKEAGNVKRFLPSEFGTDPATMENAMEPGRVTFDDKMVVRKAIEEAGIPFTYISANCFAGYFLGGLCQPGFILPSREQVTLLGDGNQKAVYVDEDDIARYTIKMIDDPRTLNKTVYIKPPKNVLSQREVVGIWEKYIGKELKKTTLSVEEFLAMMKEQDYAEQVGLTHYYHVCYEGCLTNFEIGDEAGEATKLYPEVGYTTVVEYMKRYV.

Residues 28 to 34 (GGTGYLG), Arg53, and Lys62 each bind NADP(+). The active-site Proton acceptor is Lys156. Arg160 contributes to the NADP(+) binding site. His288 lines the substrate pocket.

Belongs to the NmrA-type oxidoreductase family. Isoflavone reductase subfamily. As to quaternary structure, dimer. In terms of tissue distribution, expressed in leaves, stems, leaves and seeds.

The enzyme catalyses (+)-lariciresinol + NADP(+) = (+)-pinoresinol + NADPH + H(+). The catalysed reaction is (-)-secoisolariciresinol + NADP(+) = (+)-lariciresinol + NADPH + H(+). In terms of biological role, reductase involved in lignan biosynthesis. Catalyzes the enantioselective conversion of (+)-pinoresinol into (+)-lariciresinol and of (+)-lariciresinol into (-)-secoisolariciresinol. Abstracts the 4R-hydride from the NADPH cofactor during catalysis. This Linum usitatissimum (Flax) protein is Bifunctional pinoresinol-lariciresinol reductase 2 (PLR_Lu2).